We begin with the raw amino-acid sequence, 258 residues long: Acyl-[acyl-carrier-protein]--UDP-N-acetylglucosamine O-acyltransferase (258 aa).

Belongs to the transferase hexapeptide repeat family. LpxA subfamily. As to quaternary structure, homotrimer.

The protein resides in the cytoplasm. The enzyme catalyses a (3R)-hydroxyacyl-[ACP] + UDP-N-acetyl-alpha-D-glucosamine = a UDP-3-O-[(3R)-3-hydroxyacyl]-N-acetyl-alpha-D-glucosamine + holo-[ACP]. Its pathway is glycolipid biosynthesis; lipid IV(A) biosynthesis; lipid IV(A) from (3R)-3-hydroxytetradecanoyl-[acyl-carrier-protein] and UDP-N-acetyl-alpha-D-glucosamine: step 1/6. Its function is as follows. Involved in the biosynthesis of lipid A, a phosphorylated glycolipid that anchors the lipopolysaccharide to the outer membrane of the cell. In Stutzerimonas stutzeri (strain A1501) (Pseudomonas stutzeri), this protein is Acyl-[acyl-carrier-protein]--UDP-N-acetylglucosamine O-acyltransferase.